Reading from the N-terminus, the 729-residue chain is Transketolase (729 aa).

His-97 is a substrate binding site. Thiamine diphosphate is bound by residues His-138 and 186–188; that span reads GPL. Asp-227 is a binding site for Mg(2+). Thiamine diphosphate is bound by residues Gly-228 and Asn-257. The Mg(2+) site is built by Asn-257 and Ile-259. His-332, Arg-423, and Ser-450 together coordinate substrate. His-332 is a thiamine diphosphate binding site. The Proton donor role is filled by Glu-477. Phe-503 is a binding site for thiamine diphosphate. 3 residues coordinate substrate: His-527, Asp-535, and Arg-586.

The protein belongs to the transketolase family. In terms of assembly, homodimer. Requires Mg(2+) as cofactor. Ca(2+) is required as a cofactor. It depends on Mn(2+) as a cofactor. Co(2+) serves as cofactor. The cofactor is thiamine diphosphate.

The enzyme catalyses D-sedoheptulose 7-phosphate + D-glyceraldehyde 3-phosphate = aldehydo-D-ribose 5-phosphate + D-xylulose 5-phosphate. Its function is as follows. Catalyzes the transfer of a two-carbon ketol group from a ketose donor to an aldose acceptor, via a covalent intermediate with the cofactor thiamine pyrophosphate. The chain is Transketolase from Streptococcus pyogenes serotype M6 (strain ATCC BAA-946 / MGAS10394).